An 873-amino-acid chain; its full sequence is DNA helicase/primase complex-associated protein (873 aa).

Residues 394–422 (PPLPRDDGDGENNVVEVSSSTGGAHPPSD) are disordered.

It belongs to the herpesviridae HEPA family. Associates with the primase and the helicase to form the helicase-primase complex. Interacts with the origin-binding protein. Interacts with the polymerase catalytic subunit.

It localises to the host nucleus. Component of the helicase/primase complex. Unwinds the DNA at the replication forks and generates single-stranded DNA for both leading and lagging strand synthesis. The primase synthesizes short RNA primers on the lagging strand that the polymerase presumably elongates using dNTPs. The primase-associated factor has no known catalytic activity in the complex and may serve to facilitate the formation of the replisome by directly interacting with the origin-binding protein and the polymerase. The protein is DNA helicase/primase complex-associated protein (UL102) of Homo sapiens (Human).